A 206-amino-acid chain; its full sequence is Small ribosomal subunit protein uS4 (206 aa).

An S4 RNA-binding domain is found at G96 to K156.

This sequence belongs to the universal ribosomal protein uS4 family. In terms of assembly, part of the 30S ribosomal subunit. Contacts protein S5. The interaction surface between S4 and S5 is involved in control of translational fidelity.

Functionally, one of the primary rRNA binding proteins, it binds directly to 16S rRNA where it nucleates assembly of the body of the 30S subunit. Its function is as follows. With S5 and S12 plays an important role in translational accuracy. This is Small ribosomal subunit protein uS4 from Marinobacter nauticus (strain ATCC 700491 / DSM 11845 / VT8) (Marinobacter aquaeolei).